A 351-amino-acid chain; its full sequence is Phosphoribosylformylglycinamidine cyclo-ligase (351 aa).

It belongs to the AIR synthase family.

The protein resides in the cytoplasm. The catalysed reaction is 2-formamido-N(1)-(5-O-phospho-beta-D-ribosyl)acetamidine + ATP = 5-amino-1-(5-phospho-beta-D-ribosyl)imidazole + ADP + phosphate + H(+). Its pathway is purine metabolism; IMP biosynthesis via de novo pathway; 5-amino-1-(5-phospho-D-ribosyl)imidazole from N(2)-formyl-N(1)-(5-phospho-D-ribosyl)glycinamide: step 2/2. This chain is Phosphoribosylformylglycinamidine cyclo-ligase, found in Burkholderia cenocepacia (strain HI2424).